A 334-amino-acid chain; its full sequence is Phospho-N-acetylmuramoyl-pentapeptide-transferase (334 aa).

Helical transmembrane passes span I2–V22, V55–V75, G78–M98, E116–L136, G154–A174, G187–M207, W211–F231, V236–I256, F262–I282, and V311–K331.

Belongs to the glycosyltransferase 4 family. MraY subfamily. Mg(2+) is required as a cofactor.

It localises to the cell membrane. The enzyme catalyses UDP-N-acetyl-alpha-D-muramoyl-L-alanyl-gamma-D-glutamyl-meso-2,6-diaminopimeloyl-D-alanyl-D-alanine + di-trans,octa-cis-undecaprenyl phosphate = di-trans,octa-cis-undecaprenyl diphospho-N-acetyl-alpha-D-muramoyl-L-alanyl-D-glutamyl-meso-2,6-diaminopimeloyl-D-alanyl-D-alanine + UMP. It functions in the pathway cell wall biogenesis; peptidoglycan biosynthesis. Catalyzes the initial step of the lipid cycle reactions in the biosynthesis of the cell wall peptidoglycan: transfers peptidoglycan precursor phospho-MurNAc-pentapeptide from UDP-MurNAc-pentapeptide onto the lipid carrier undecaprenyl phosphate, yielding undecaprenyl-pyrophosphoryl-MurNAc-pentapeptide, known as lipid I. This Desulforudis audaxviator (strain MP104C) protein is Phospho-N-acetylmuramoyl-pentapeptide-transferase.